The chain runs to 1365 residues: DNA-directed RNA polymerase subunit beta' (1365 aa).

4 residues coordinate Zn(2+): Cys249, Cys316, Cys323, and Cys326.

This sequence belongs to the RNA polymerase beta' chain family. RpoC2 subfamily. As to quaternary structure, in cyanobacteria the RNAP catalytic core is composed of 2 alpha, 1 beta, 1 beta', 1 gamma and 1 omega subunit. When a sigma factor is associated with the core the holoenzyme is formed, which can initiate transcription. Zn(2+) serves as cofactor.

The enzyme catalyses RNA(n) + a ribonucleoside 5'-triphosphate = RNA(n+1) + diphosphate. DNA-dependent RNA polymerase catalyzes the transcription of DNA into RNA using the four ribonucleoside triphosphates as substrates. This Synechococcus sp. (strain CC9311) protein is DNA-directed RNA polymerase subunit beta'.